The following is a 288-amino-acid chain: Quinate/shikimate dehydrogenase (288 aa).

Lys-71 and Asp-107 together coordinate substrate. Residues 132-135 (AGGA), 155-158 (NRRD), Lys-205, 232-235 (CVYN), and Gly-255 each bind NAD(+).

Belongs to the shikimate dehydrogenase family. Homodimer.

The enzyme catalyses L-quinate + NAD(+) = 3-dehydroquinate + NADH + H(+). The catalysed reaction is L-quinate + NADP(+) = 3-dehydroquinate + NADPH + H(+). It catalyses the reaction shikimate + NADP(+) = 3-dehydroshikimate + NADPH + H(+). It carries out the reaction shikimate + NAD(+) = 3-dehydroshikimate + NADH + H(+). It participates in metabolic intermediate biosynthesis; chorismate biosynthesis; chorismate from D-erythrose 4-phosphate and phosphoenolpyruvate: step 4/7. Functionally, the actual biological function of YdiB remains unclear, nor is it known whether 3-dehydroshikimate or quinate represents the natural substrate. Catalyzes the reversible NAD-dependent reduction of both 3-dehydroshikimate (DHSA) and 3-dehydroquinate to yield shikimate (SA) and quinate, respectively. It can use both NAD or NADP for catalysis, however it has higher catalytic efficiency with NAD. The polypeptide is Quinate/shikimate dehydrogenase (Escherichia coli O7:K1 (strain IAI39 / ExPEC)).